Here is a 606-residue protein sequence, read N- to C-terminus: tRNA 5-methylaminomethyl-2-thiouridine biosynthesis bifunctional protein MnmC (606 aa).

The interval 1–237 (MNSNSSVQFN…KRDMLCGHYL (237 aa)) is tRNA (mnm(5)s(2)U34)-methyltransferase. The segment at 254 to 606 (IGGGISAACS…RRISVSRFKG (353 aa)) is FAD-dependent cmnm(5)s(2)U34 oxidoreductase.

The protein in the N-terminal section; belongs to the methyltransferase superfamily. tRNA (mnm(5)s(2)U34)-methyltransferase family. It in the C-terminal section; belongs to the DAO family. FAD is required as a cofactor.

It is found in the cytoplasm. The catalysed reaction is 5-aminomethyl-2-thiouridine(34) in tRNA + S-adenosyl-L-methionine = 5-methylaminomethyl-2-thiouridine(34) in tRNA + S-adenosyl-L-homocysteine + H(+). Functionally, catalyzes the last two steps in the biosynthesis of 5-methylaminomethyl-2-thiouridine (mnm(5)s(2)U) at the wobble position (U34) in tRNA. Catalyzes the FAD-dependent demodification of cmnm(5)s(2)U34 to nm(5)s(2)U34, followed by the transfer of a methyl group from S-adenosyl-L-methionine to nm(5)s(2)U34, to form mnm(5)s(2)U34. This Idiomarina loihiensis (strain ATCC BAA-735 / DSM 15497 / L2-TR) protein is tRNA 5-methylaminomethyl-2-thiouridine biosynthesis bifunctional protein MnmC.